The primary structure comprises 86 residues: Large ribosomal subunit protein bL27 (86 aa).

The disordered stretch occupies residues 1–21; the sequence is MAHKKGASSSRNGRDSAAQRL.

The protein belongs to the bacterial ribosomal protein bL27 family.

The sequence is that of Large ribosomal subunit protein bL27 (rpmA) from Mycobacterium tuberculosis (strain CDC 1551 / Oshkosh).